A 177-amino-acid polypeptide reads, in one-letter code: Large ribosomal subunit protein uL6 (177 aa).

Belongs to the universal ribosomal protein uL6 family. As to quaternary structure, part of the 50S ribosomal subunit.

Its function is as follows. This protein binds to the 23S rRNA, and is important in its secondary structure. It is located near the subunit interface in the base of the L7/L12 stalk, and near the tRNA binding site of the peptidyltransferase center. The sequence is that of Large ribosomal subunit protein uL6 from Stutzerimonas stutzeri (strain A1501) (Pseudomonas stutzeri).